Here is a 491-residue protein sequence, read N- to C-terminus: Trehalose-6-phosphate synthase (491 aa).

Position 22 (arginine 22) interacts with D-glucose 6-phosphate. Position 42–43 (42–43 (GG)) interacts with UDP-alpha-D-glucose. Tyrosine 100 and aspartate 154 together coordinate D-glucose 6-phosphate. Residues arginine 296 and lysine 301 each contribute to the UDP-alpha-D-glucose site. Arginine 334 is a D-glucose 6-phosphate binding site. 399-403 (LVAKE) lines the UDP-alpha-D-glucose pocket.

It belongs to the glycosyltransferase 20 family. As to quaternary structure, homotetramer.

It carries out the reaction ADP-alpha-D-glucose + D-glucose 6-phosphate = alpha,alpha-trehalose 6-phosphate + ADP + H(+). It catalyses the reaction CDP-alpha-D-glucose + D-glucose 6-phosphate = alpha,alpha-trehalose 6-phosphate + CDP + H(+). The catalysed reaction is GDP-alpha-D-glucose + D-glucose 6-phosphate = alpha,alpha-trehalose 6-phosphate + GDP + H(+). The enzyme catalyses TDP-alpha-D-glucose + D-glucose 6-phosphate = 5-methyl-UDP + alpha,alpha-trehalose 6-phosphate + H(+). It carries out the reaction D-glucose 6-phosphate + UDP-alpha-D-glucose = alpha,alpha-trehalose 6-phosphate + UDP + H(+). Its pathway is glycan biosynthesis; trehalose biosynthesis. Probably involved in the osmoprotection via the biosynthesis of trehalose and in the production of glycogen and alpha-glucan via the TreS-Pep2 branch involved in the biosynthesis of maltose-1-phosphate (M1P). Catalyzes the transfer of glucose from UDP-glucose (UDP-Glc) to D-glucose 6-phosphate (Glc-6-P) to form trehalose-6-phosphate. Probably also able to use ADP-Glc, CDP-Glc, GDP-Glc and TDP-Glc as glucosyl donors. This Mycolicibacterium vanbaalenii (strain DSM 7251 / JCM 13017 / BCRC 16820 / KCTC 9966 / NRRL B-24157 / PYR-1) (Mycobacterium vanbaalenii) protein is Trehalose-6-phosphate synthase.